Consider the following 374-residue polypeptide: CMP-N-acetylneuraminate-beta-1,4-galactoside alpha-2,3-sialyltransferase (374 aa).

Topologically, residues 1 to 8 are cytoplasmic; the sequence is MGLLVFVR. A helical; Signal-anchor for type II membrane protein transmembrane segment spans residues 9-28; it reads NLLLALCLFLVLGFLYYSAW. The Lumenal segment spans residues 29–374; the sequence is KLHLLQWEDS…RVITDLSSGI (346 aa). Asn-79 and Asn-170 each carry an N-linked (GlcNAc...) asparagine glycan. A disulfide bridge connects residues Cys-159 and Cys-313.

This sequence belongs to the glycosyltransferase 29 family. The soluble form derives from the membrane form by proteolytic processing. In terms of tissue distribution, found in all tissues tested. High expression found in brain, liver, kidney, colon, heart and lung.

It localises to the golgi apparatus. The protein resides in the golgi stack membrane. It is found in the secreted. It carries out the reaction a beta-D-galactosyl-(1-&gt;4)-N-acetyl-beta-D-glucosaminyl derivative + CMP-N-acetyl-beta-neuraminate = an N-acetyl-alpha-neuraminyl-(2-&gt;3)-beta-D-galactosyl-(1-&gt;4)-N-acetyl-beta-D-glucosaminyl derivative + CMP + H(+). It functions in the pathway protein modification; protein glycosylation. Its function is as follows. Catalyzes the formation of the NeuAc-alpha-2,3-Gal-beta-1,4-GlcNAc-, NeuAc-alpha-2,3-Gal-beta-1,3-GlcNAc- and NeuAc-alpha-2,3-Gal-beta-1,3-GalNAc- sequences found in terminal carbohydrate groups of glycoproteins and glycolipids. The highest activity is toward Gal-beta-1,3-GlcNAc and the lowest toward Gal-beta-1,3-GalNAc. The protein is CMP-N-acetylneuraminate-beta-1,4-galactoside alpha-2,3-sialyltransferase (St3gal3) of Rattus norvegicus (Rat).